The chain runs to 223 residues: Cytidylate kinase (223 aa).

ATP is bound at residue 10–18; that stretch reads GPASSGKST.

Belongs to the cytidylate kinase family. Type 1 subfamily.

It is found in the cytoplasm. It carries out the reaction CMP + ATP = CDP + ADP. The catalysed reaction is dCMP + ATP = dCDP + ADP. In Streptococcus pneumoniae (strain Taiwan19F-14), this protein is Cytidylate kinase.